Consider the following 171-residue polypeptide: S-ribosylhomocysteine lyase (171 aa).

Positions 54, 58, and 128 each coordinate Fe cation.

It belongs to the LuxS family. Homodimer. Fe cation is required as a cofactor.

It carries out the reaction S-(5-deoxy-D-ribos-5-yl)-L-homocysteine = (S)-4,5-dihydroxypentane-2,3-dione + L-homocysteine. Its function is as follows. Involved in the synthesis of autoinducer 2 (AI-2) which is secreted by bacteria and is used to communicate both the cell density and the metabolic potential of the environment. The regulation of gene expression in response to changes in cell density is called quorum sensing. Catalyzes the transformation of S-ribosylhomocysteine (RHC) to homocysteine (HC) and 4,5-dihydroxy-2,3-pentadione (DPD). The chain is S-ribosylhomocysteine lyase from Escherichia coli (strain 55989 / EAEC).